The sequence spans 280 residues: Formyltetrahydrofolate deformylase (280 aa).

In terms of domain architecture, ACT spans Val-8–Arg-86. Residue Asp-225 is part of the active site.

Belongs to the PurU family. As to quaternary structure, homohexamer.

The enzyme catalyses (6R)-10-formyltetrahydrofolate + H2O = (6S)-5,6,7,8-tetrahydrofolate + formate + H(+). It functions in the pathway purine metabolism; IMP biosynthesis via de novo pathway; formate from 10-formyl-5,6,7,8-tetrahydrofolate: step 1/1. Its activity is regulated as follows. Activated by methionine, inhibited by glycine. Its function is as follows. Catalyzes the hydrolysis of 10-formyltetrahydrofolate (formyl-FH4) to formate and tetrahydrofolate (FH4). Provides the major source of formate for the PurT-dependent synthesis of 5'-phosphoribosyl-N-formylglycinamide (FGAR) during aerobic growth. Has a role in regulating the one-carbon pool. In Escherichia coli (strain K12), this protein is Formyltetrahydrofolate deformylase.